A 130-amino-acid chain; its full sequence is Mitochondrial import protein 1 (130 aa).

A disordered region spans residues 1 to 41; the sequence is MSAEEISNPLAESGVTISSDSEQYSAPESASPQSPSSSSPA. Residues 15–24 are compositionally biased toward polar residues; the sequence is VTISSDSEQY. Over residues 25-41 the composition is skewed to low complexity; the sequence is SAPESASPQSPSSSSPA.

Belongs to the MIM1 family.

It localises to the mitochondrion outer membrane. Required for the assembly of the TOM (translocase of outer membrane) receptor complex, which is responsible for the recognition and translocation of cytosolically synthesized mitochondrial preproteins. This chain is Mitochondrial import protein 1, found in Neurospora crassa (strain ATCC 24698 / 74-OR23-1A / CBS 708.71 / DSM 1257 / FGSC 987).